A 122-amino-acid chain; its full sequence is Small ribosomal subunit protein uS13 (122 aa).

Residues 96-122 form a disordered region; it reads LPCRGQRTHTNARTRKGPRKPIAGKKK.

This sequence belongs to the universal ribosomal protein uS13 family. As to quaternary structure, part of the 30S ribosomal subunit. Forms a loose heterodimer with protein S19. Forms two bridges to the 50S subunit in the 70S ribosome.

In terms of biological role, located at the top of the head of the 30S subunit, it contacts several helices of the 16S rRNA. In the 70S ribosome it contacts the 23S rRNA (bridge B1a) and protein L5 of the 50S subunit (bridge B1b), connecting the 2 subunits; these bridges are implicated in subunit movement. Contacts the tRNAs in the A and P-sites. In Magnetococcus marinus (strain ATCC BAA-1437 / JCM 17883 / MC-1), this protein is Small ribosomal subunit protein uS13.